Consider the following 210-residue polypeptide: Ribosomal RNA large subunit methyltransferase E (210 aa).

Residues Gly61, Trp63, Asp81, Asp97, and Asp122 each contribute to the S-adenosyl-L-methionine site. Lys162 functions as the Proton acceptor in the catalytic mechanism.

This sequence belongs to the class I-like SAM-binding methyltransferase superfamily. RNA methyltransferase RlmE family.

The protein localises to the cytoplasm. The catalysed reaction is uridine(2552) in 23S rRNA + S-adenosyl-L-methionine = 2'-O-methyluridine(2552) in 23S rRNA + S-adenosyl-L-homocysteine + H(+). In terms of biological role, specifically methylates the uridine in position 2552 of 23S rRNA at the 2'-O position of the ribose in the fully assembled 50S ribosomal subunit. This Xanthomonas oryzae pv. oryzae (strain MAFF 311018) protein is Ribosomal RNA large subunit methyltransferase E.